A 160-amino-acid chain; its full sequence is MKVLAIFALCIIGALATPCDDFKIMQEAWNTMKNEEVEILYTVFKAYPDIQAKFPQFVGKDLETIKGTAEFAVHATRIVSFMTEVISLLGNPDNLPAIMSLLSKLGKDHKGRGITVKQFDEFHEAFHNFLHTHSVWNDNVDAAWHCNEKEIRKVINANLE.

Residues methionine 1–alanine 16 form the signal peptide. The region spanning threonine 17–glutamate 160 is the Globin domain. The heme b site is built by histidine 74 and histidine 109.

It belongs to the globin family.

The protein is Globin CTT-Y (CTT-Y) of Chironomus thummi piger (Midge).